Here is a 98-residue protein sequence, read N- to C-terminus: La1-like protein 13 (98 aa).

An N-terminal signal peptide occupies residues 1 to 24 (MERILKPVFLAILIVLSFSSQCMG). Lys-97 carries the lysine amide modification.

The protein belongs to the scorpion La1-like peptide family. Contains 4 disulfide bonds. In terms of tissue distribution, expressed by the venom gland.

It localises to the secreted. The polypeptide is La1-like protein 13 (Urodacus yaschenkoi (Inland robust scorpion)).